We begin with the raw amino-acid sequence, 425 residues long: uncharacterized protein (425 aa).

Residues 55–181 (RYSHSLGVYE…DLDADRMDYL (127 aa)) form the HD domain.

This is an uncharacterized protein from Mycoplasma pneumoniae (strain ATCC 29342 / M129 / Subtype 1) (Mycoplasmoides pneumoniae).